The chain runs to 440 residues: MPKPVVAIVGRPNVGKSTLFNRIVGNRVAIVEGEPGVTRDRLYQDAEWSGRSFTLVDTGGLDFKESDEIIQGVRRQAEIAIREADAVLLVVDAKAGLNPGDEEVASIIRRAEKPALLVANKVEKFDSLEQIYDFYRLGLGDPLPVSAAEGLNTGDLLDRLVEMLPPEKEDEYPPEAIKIAVIGRPNVGKSSLVNLILGEERVIVSNVPGTTRDAIDTPFEANGRHYVIIDTAGMRRKSRIDRPTEKYGVIRALRAIDRSDVVLVVLDAVEGVTDQDKRIAGYAHEAGKASVIVVNKWDLVEKDGHTMNRYTEKIREELAFMHYSPLLFTSAATGKRVGKIMELVDMVAGRHSMRISTPGLNALIREAVLRTPPPSDKGRRLKITYAVQGGIKPPKFVLFVNAPDLMHFSYLRYLENQIRAAFGFEGTPIRFVLRKKTKEA.

EngA-type G domains follow at residues 4–168 (PVVA…PPEK) and 177–352 (IKIA…GRHS). GTP contacts are provided by residues 10-17 (GRPNVGKS), 57-61 (DTGGL), 120-123 (NKVE), 183-190 (GRPNVGKS), 230-234 (DTAGM), and 295-298 (NKWD). One can recognise a KH-like domain in the interval 353–437 (MRISTPGLNA…PIRFVLRKKT (85 aa)).

The protein belongs to the TRAFAC class TrmE-Era-EngA-EngB-Septin-like GTPase superfamily. EngA (Der) GTPase family. In terms of assembly, associates with the 50S ribosomal subunit.

In terms of biological role, GTPase that plays an essential role in the late steps of ribosome biogenesis. The sequence is that of GTPase Der from Pelotomaculum thermopropionicum (strain DSM 13744 / JCM 10971 / SI).